A 259-amino-acid polypeptide reads, in one-letter code: 1,2-dihydroxy-1,2-dihydronaphthalene dehydrogenase (259 aa).

8 to 32 contributes to the NAD(+) binding site; that stretch reads SITGAGSGIGLELVRSFKSAGYYVS. Position 140 (S140) interacts with substrate. Residue Y153 is the Proton acceptor of the active site.

This sequence belongs to the short-chain dehydrogenases/reductases (SDR) family.

The enzyme catalyses (1R,2S)-1,2-dihydronaphthalene-1,2-diol + NAD(+) = naphthalene-1,2-diol + NADH + H(+). It carries out the reaction cis-1,2-dihydroxy-1,2-dihydrodibenzothiophene + NAD(+) = 1,2-dihydroxydibenzothiophene + NADH + H(+). It functions in the pathway aromatic compound metabolism; naphthalene degradation. Catalyzes the oxidation of naphthalene dihydrodiol into 1,2-dihydroxynaphthalene. The sequence is that of 1,2-dihydroxy-1,2-dihydronaphthalene dehydrogenase (nahB) from Pseudomonas putida (Arthrobacter siderocapsulatus).